The chain runs to 91 residues: Small ribosomal subunit protein uS15 (91 aa).

Belongs to the universal ribosomal protein uS15 family. Part of the 30S ribosomal subunit. Forms a bridge to the 50S subunit in the 70S ribosome, contacting the 23S rRNA.

Its function is as follows. One of the primary rRNA binding proteins, it binds directly to 16S rRNA where it helps nucleate assembly of the platform of the 30S subunit by binding and bridging several RNA helices of the 16S rRNA. In terms of biological role, forms an intersubunit bridge (bridge B4) with the 23S rRNA of the 50S subunit in the ribosome. This chain is Small ribosomal subunit protein uS15, found in Rickettsia bellii (strain OSU 85-389).